A 186-amino-acid chain; its full sequence is Casparian strip membrane protein 5 (186 aa).

Residues 1 to 25 (MKTDAIELGVAKDSTPIGGANRGVS) are Cytoplasmic-facing. The chain crosses the membrane as a helical span at residues 26–46 (ILDFILRLVALVGTLASAILM). Residues 47–73 (GTTNETLPFATQFIRFRAEYDDLPTFT) are Extracellular-facing. Asn50 is a glycosylation site (N-linked (GlcNAc...) asparagine). The chain crosses the membrane as a helical span at residues 74–94 (FFVVANIVVSGYLLLSLPLSI). Over 95-106 (VNIVRSTAKNRR) the chain is Cytoplasmic. A helical membrane pass occupies residues 107 to 127 (IILIIFDTAMLALLTAGASAA). The Extracellular segment spans residues 128–156 (AAIVYLAHKGNTRANWFAICQQFNSFCER). The helical transmembrane segment at 157–177 (ISGSLIGSFVGVAVFILLILM) threads the bilayer. The Cytoplasmic segment spans residues 178 to 186 (SASALSRRN).

It belongs to the Casparian strip membrane proteins (CASP) family. In terms of assembly, homodimer and heterodimers.

Its subcellular location is the cell membrane. Its function is as follows. Regulates membrane-cell wall junctions and localized cell wall deposition. Required for establishment of the Casparian strip membrane domain (CSD) and the subsequent formation of Casparian strips, a cell wall modification of the root endodermis that determines an apoplastic barrier between the intraorganismal apoplasm and the extraorganismal apoplasm and prevents lateral diffusion. This is Casparian strip membrane protein 5 from Ricinus communis (Castor bean).